Here is a 906-residue protein sequence, read N- to C-terminus: Catenin alpha-1 (906 aa).

Threonine 2 carries the N-acetylthreonine modification. Positions 2–228 (TAVHTGNINF…PILYTASQAC (227 aa)) are involved in homodimerization. Lysine 57 participates in a covalent cross-link: Glycyl lysine isopeptide (Lys-Gly) (interchain with G-Cter in SUMO2). Positions 97–148 (VRKQCDLMKSAAGEFADDPCSSVKRGNMVRAARALLSAVTRLLILADMADVY) are interaction with JUP and CTNNB1. Residues serine 264, serine 268, serine 295, and serine 297 each carry the phosphoserine modification. The tract at residues 325–394 (TRDDRRERIV…AVMDHVSDSF (70 aa)) is interaction with alpha-actinin. Position 634 is a phosphothreonine (threonine 634). Position 641 is a phosphoserine (serine 641). Residue threonine 645 is modified to Phosphothreonine. 2 positions are modified to phosphoserine: serine 652 and serine 655. A Phosphothreonine modification is found at threonine 658. Lysine 797 is covalently cross-linked (Glycyl lysine isopeptide (Lys-Gly) (interchain with G-Cter in SUMO2)). Serine 851 is modified (phosphoserine). Basic and acidic residues predominate over residues 864 to 880 (PEKKPLVKREKQDETQT). Residues 864-894 (PEKKPLVKREKQDETQTKIKRASQKKHVNPV) are disordered. The segment covering 881–891 (KIKRASQKKHV) has biased composition (basic residues).

This sequence belongs to the vinculin/alpha-catenin family. As to quaternary structure, monomer and homodimer; the monomer preferentially binds to CTNNB1 and the homodimer to actin. Component of an cadherin:catenin adhesion complex composed of at least of CDH26, beta-catenin/CTNNB1, alpha-catenin/CTNNA1 and p120 catenin/CTNND1. Possible component of an E-cadherin/ catenin adhesion complex together with E-cadherin/CDH1 and beta-catenin/CTNNB1 or gamma-catenin/JUP; the complex is located to adherens junctions. The stable association of CTNNA1 is controversial as CTNNA1 was shown not to bind to F-actin when assembled in the complex. Alternatively, the CTNNA1-containing complex may be linked to F-actin by other proteins such as LIMA1. Binds AFDN and F-actin. Interacts with ARHGAP21. Interacts with AJUBA. Interacts with LIMA1. Interacts with vinculin/VCL. Interacts with TJP2/ZO2 (via N-terminus). Interacts with TJP1/ZO1 (via N-terminus). In terms of processing, sumoylated. Post-translationally, phosphorylation seems to contribute to the strength of cell-cell adhesion rather than to the basic capacity for cell-cell adhesion.

It is found in the cytoplasm. The protein localises to the cytoskeleton. It localises to the cell junction. Its subcellular location is the adherens junction. The protein resides in the cell membrane. It is found in the nucleus. Associates with the cytoplasmic domain of a variety of cadherins. The association of catenins to cadherins produces a complex which is linked to the actin filament network, and which seems to be of primary importance for cadherins cell-adhesion properties. Can associate with both E- and N-cadherins. Originally believed to be a stable component of E-cadherin/catenin adhesion complexes and to mediate the linkage of cadherins to the actin cytoskeleton at adherens junctions. In contrast, cortical actin was found to be much more dynamic than E-cadherin/catenin complexes and CTNNA1 was shown not to bind to F-actin when assembled in the complex suggesting a different linkage between actin and adherens junctions components. The homodimeric form may regulate actin filament assembly and inhibit actin branching by competing with the Arp2/3 complex for binding to actin filaments. Involved in the regulation of WWTR1/TAZ, YAP1 and TGFB1-dependent SMAD2 and SMAD3 nuclear accumulation. May play a crucial role in cell differentiation. The sequence is that of Catenin alpha-1 from Bos taurus (Bovine).